The sequence spans 214 residues: Thymidylate kinase (214 aa).

Residue 10-17 participates in ATP binding; it reads GPDGAGKT.

It belongs to the thymidylate kinase family.

The enzyme catalyses dTMP + ATP = dTDP + ADP. Phosphorylation of dTMP to form dTDP in both de novo and salvage pathways of dTTP synthesis. The polypeptide is Thymidylate kinase (Limosilactobacillus fermentum (strain NBRC 3956 / LMG 18251) (Lactobacillus fermentum)).